Consider the following 176-residue polypeptide: Macro domain-containing protein lmo2759 (176 aa).

One can recognise a Macro domain in the interval 1–175 (MEITIVKGDI…LYNKLINSEV (175 aa)).

The protein belongs to the MacroD-type family.

This is Macro domain-containing protein lmo2759 from Listeria monocytogenes serovar 1/2a (strain ATCC BAA-679 / EGD-e).